The following is a 31-amino-acid chain: Photosystem I reaction center subunit XII (31 aa).

A helical transmembrane segment spans residues 6 to 25 (TQILAALVVALLPAFLAFRL).

The protein belongs to the PsaM family.

It localises to the cellular thylakoid membrane. The chain is Photosystem I reaction center subunit XII from Synechocystis sp. (strain ATCC 27184 / PCC 6803 / Kazusa).